A 104-amino-acid chain; its full sequence is Pyrimidine/purine nucleoside phosphorylase (104 aa).

Belongs to the nucleoside phosphorylase PpnP family.

The enzyme catalyses a purine D-ribonucleoside + phosphate = a purine nucleobase + alpha-D-ribose 1-phosphate. It carries out the reaction adenosine + phosphate = alpha-D-ribose 1-phosphate + adenine. It catalyses the reaction cytidine + phosphate = cytosine + alpha-D-ribose 1-phosphate. The catalysed reaction is guanosine + phosphate = alpha-D-ribose 1-phosphate + guanine. The enzyme catalyses inosine + phosphate = alpha-D-ribose 1-phosphate + hypoxanthine. It carries out the reaction thymidine + phosphate = 2-deoxy-alpha-D-ribose 1-phosphate + thymine. It catalyses the reaction uridine + phosphate = alpha-D-ribose 1-phosphate + uracil. The catalysed reaction is xanthosine + phosphate = alpha-D-ribose 1-phosphate + xanthine. Its function is as follows. Catalyzes the phosphorolysis of diverse nucleosides, yielding D-ribose 1-phosphate and the respective free bases. Can use uridine, adenosine, guanosine, cytidine, thymidine, inosine and xanthosine as substrates. Also catalyzes the reverse reactions. This Geotalea uraniireducens (strain Rf4) (Geobacter uraniireducens) protein is Pyrimidine/purine nucleoside phosphorylase.